We begin with the raw amino-acid sequence, 224 residues long: Putative adhesin A1E_05320 (224 aa).

The first 22 residues, 1–22, serve as a signal peptide directing secretion; that stretch reads MKKLLLIAATSATMLSSTLSFA.

This is Putative adhesin A1E_05320 from Rickettsia canadensis (strain McKiel).